The chain runs to 166 residues: Large ribosomal subunit protein uL10 (166 aa).

It belongs to the universal ribosomal protein uL10 family. As to quaternary structure, part of the ribosomal stalk of the 50S ribosomal subunit. The N-terminus interacts with L11 and the large rRNA to form the base of the stalk. The C-terminus forms an elongated spine to which L12 dimers bind in a sequential fashion forming a multimeric L10(L12)X complex.

Its function is as follows. Forms part of the ribosomal stalk, playing a central role in the interaction of the ribosome with GTP-bound translation factors. This chain is Large ribosomal subunit protein uL10, found in Enterococcus faecalis (strain ATCC 700802 / V583).